Here is a 166-residue protein sequence, read N- to C-terminus: Protein SprT (166 aa).

Positions 20 to 164 (EHLANANRKL…CVRCGDLLVA (145 aa)) constitute a SprT-like domain. His-78 serves as a coordination point for Zn(2+). The active site involves Glu-79. His-82 is a binding site for Zn(2+).

Belongs to the SprT family. The cofactor is Zn(2+).

It is found in the cytoplasm. The chain is Protein SprT from Klebsiella pneumoniae subsp. pneumoniae (strain ATCC 700721 / MGH 78578).